The following is a 170-amino-acid chain: MSAKSKQYFNIFVFIISLIFFDQLSKYLVAKYVKLGSIYFSFFDDFFRIIHVRNTGILFSMGSNIHYSLKKIFFLAMPIFILIFVFYLSLKERNCIARISLLLIFSGGVGNVIDRLFRPSGVVDFLDLKFYGIFGLDRWPTFNFADSYVVIGMILFLVYDFFIKRKVLNK.

Transmembrane regions (helical) follow at residues 9–29, 72–92, and 94–114; these read FNIF…KYLV, IFFL…SLKE, and NCIA…NVID. Residues Asp-124 and Asp-146 contribute to the active site. The helical transmembrane segment at 143-163 threads the bilayer; the sequence is NFADSYVVIGMILFLVYDFFI.

The protein belongs to the peptidase A8 family.

It is found in the cell inner membrane. It carries out the reaction Release of signal peptides from bacterial membrane prolipoproteins. Hydrolyzes -Xaa-Yaa-Zaa-|-(S,diacylglyceryl)Cys-, in which Xaa is hydrophobic (preferably Leu), and Yaa (Ala or Ser) and Zaa (Gly or Ala) have small, neutral side chains.. It participates in protein modification; lipoprotein biosynthesis (signal peptide cleavage). This protein specifically catalyzes the removal of signal peptides from prolipoproteins. This Borreliella burgdorferi (strain ATCC 35210 / DSM 4680 / CIP 102532 / B31) (Borrelia burgdorferi) protein is Lipoprotein signal peptidase.